The sequence spans 258 residues: 5'-nucleotidase SurE (258 aa).

Positions 9, 10, 42, and 96 each coordinate a divalent metal cation.

It belongs to the SurE nucleotidase family. The cofactor is a divalent metal cation.

The protein localises to the cytoplasm. The catalysed reaction is a ribonucleoside 5'-phosphate + H2O = a ribonucleoside + phosphate. Its function is as follows. Nucleotidase that shows phosphatase activity on nucleoside 5'-monophosphates. This is 5'-nucleotidase SurE from Campylobacter jejuni subsp. jejuni serotype O:6 (strain 81116 / NCTC 11828).